A 177-amino-acid chain; its full sequence is Antigen TpF1 (177 aa).

It belongs to the Dps family. In terms of assembly, homodecamer; either linked or stabilized by disulfide bonds.

May play an important structural role in the outer membrane. This chain is Antigen TpF1 (tpf1), found in Treponema pallidum (strain Nichols).